Reading from the N-terminus, the 361-residue chain is Palmitoyltransferase ZDHHC16 (361 aa).

Topologically, residues 1–77 (MRGQRSLLLG…VYWLVDNVIR (77 aa)) are cytoplasmic. Residues 78-98 (WFGVVFVVLVIVLTGSIVAIA) traverse the membrane as a helical segment. Over 99–116 (YLCVLPLILRTYSVPRLC) the chain is Lumenal. Residues 117–137 (WHFFYSHWNLILIVFHYYQAI) traverse the membrane as a helical segment. Residues 138–198 (TTPPGYPPQG…NNCVGHYNHR (61 aa)) lie on the Cytoplasmic side of the membrane. The DHHC domain occupies 155-205 (SICKKCIYPKPARTHHCSICNRCVLKMDHHCPWLNNCVGHYNHRYFFSFCF). Residue cysteine 185 is the S-palmitoyl cysteine intermediate of the active site. The chain crosses the membrane as a helical span at residues 199–219 (YFFSFCFFMTLGCVYCSYGSW). Over 220 to 250 (DLFREAYAAIETYHQTPPPTFSFRERITHKS) the chain is Lumenal. The helical transmembrane segment at 251–271 (LVYLWFLCSSVALALGALTMW) threads the bilayer. The Cytoplasmic portion of the chain corresponds to 272-361 (HAVLISRGET…TAHSASVMAV (90 aa)).

It belongs to the DHHC palmitoyltransferase family. In terms of assembly, interacts with ABL1. Interacts with COPS5. In terms of tissue distribution, ubiquitously expressed.

It localises to the endoplasmic reticulum membrane. The catalysed reaction is L-cysteinyl-[protein] + hexadecanoyl-CoA = S-hexadecanoyl-L-cysteinyl-[protein] + CoA. Its function is as follows. Palmitoyl acyltransferase that mediates palmitoylation of proteins such as PLN and ZDHHC6. Required during embryonic heart development and cardiac function, possibly by mediating palmitoylation of PLN, thereby affecting PLN phosphorylation and homooligomerization. Also required for eye development. Palmitoylates ZDHHC6, affecting the quaternary assembly of ZDHHC6, its localization, stability and function. May play a role in DNA damage response. May be involved in apoptosis regulation. Involved in the proliferation of neural stem cells by regulating the FGF/ERK pathway. This chain is Palmitoyltransferase ZDHHC16, found in Mus musculus (Mouse).